Here is a 183-residue protein sequence, read N- to C-terminus: Dual-action ribosomal maturation protein DarP (183 aa).

Residues 1–27 (MSSHSQEPVGEENFDDSEYDRPNKSQV) are disordered. Positions 9–18 (VGEENFDDSE) are enriched in acidic residues.

The protein belongs to the DarP family.

The protein localises to the cytoplasm. Functionally, member of a network of 50S ribosomal subunit biogenesis factors which assembles along the 30S-50S interface, preventing incorrect 23S rRNA structures from forming. Promotes peptidyl transferase center (PTC) maturation. The chain is Dual-action ribosomal maturation protein DarP from Bordetella pertussis (strain Tohama I / ATCC BAA-589 / NCTC 13251).